The primary structure comprises 227 residues: 7-cyano-7-deazaguanine synthase (227 aa).

9 to 19 provides a ligand contact to ATP; sequence LSGGLDSATVL. Cysteine 189, cysteine 199, cysteine 202, and cysteine 205 together coordinate Zn(2+).

The protein belongs to the QueC family. Requires Zn(2+) as cofactor.

The enzyme catalyses 7-carboxy-7-deazaguanine + NH4(+) + ATP = 7-cyano-7-deazaguanine + ADP + phosphate + H2O + H(+). Its pathway is purine metabolism; 7-cyano-7-deazaguanine biosynthesis. Catalyzes the ATP-dependent conversion of 7-carboxy-7-deazaguanine (CDG) to 7-cyano-7-deazaguanine (preQ(0)). The protein is 7-cyano-7-deazaguanine synthase of Cupriavidus taiwanensis (strain DSM 17343 / BCRC 17206 / CCUG 44338 / CIP 107171 / LMG 19424 / R1) (Ralstonia taiwanensis (strain LMG 19424)).